Consider the following 636-residue polypeptide: Carbon monoxide dehydrogenase 1 (636 aa).

[4Fe-4S] cluster is bound by residues C38, C46, C47, C50, C55, and C69. Residues H262, C297, C335, C448, C478, and C528 each coordinate [Ni-4Fe-5S] cluster.

This sequence belongs to the Ni-containing carbon monoxide dehydrogenase family. As to quaternary structure, homodimer. [4Fe-4S] cluster is required as a cofactor. [Ni-4Fe-5S] cluster serves as cofactor.

It localises to the cytoplasm. Its subcellular location is the cell membrane. The catalysed reaction is CO + 2 oxidized [2Fe-2S]-[ferredoxin] + H2O = 2 reduced [2Fe-2S]-[ferredoxin] + CO2 + 2 H(+). With respect to regulation, inactivated by O(2). Functionally, CODH oxidizes carbon monoxide coupled, via CooF, to the reduction of a hydrogen cation by a hydrogenase (possibly CooH). In Carboxydothermus hydrogenoformans (strain ATCC BAA-161 / DSM 6008 / Z-2901), this protein is Carbon monoxide dehydrogenase 1 (cooS1).